Consider the following 425-residue polypeptide: Proteinase-activated receptor 1 (425 aa).

Residues M1 to S21 form the signal peptide. Residues A22–R41 constitute a propeptide, removed for receptor activation. N-linked (GlcNAc...) asparagine glycans are attached at residues N35, N62, and N75. Residues S42–T102 lie on the Extracellular side of the membrane. The chain crosses the membrane as a helical span at residues L103–I128. Residues L129–A137 lie on the Cytoplasmic side of the membrane. Residues V138–F157 traverse the membrane as a helical segment. Residues K158 to R176 are Extracellular-facing. A disulfide bridge connects residues C175 and C254. Residues F177–I198 traverse the membrane as a helical segment. Residues D199–R218 are Cytoplasmic-facing. The helical transmembrane segment at A219–L239 threads the bilayer. Over K240 to A268 the chain is Extracellular. 2 N-linked (GlcNAc...) asparagine glycosylation sites follow: N250 and N259. The chain crosses the membrane as a helical span at residues Y269–V288. Over C289 to A311 the chain is Cytoplasmic. The helical transmembrane segment at L312–I334 threads the bilayer. Residues A335–Y350 are Extracellular-facing. Residues F351–A374 form a helical membrane-spanning segment. The Cytoplasmic portion of the chain corresponds to S375–T425. S418 is subject to Phosphoserine.

It belongs to the G-protein coupled receptor 1 family. Proteolytic cleavage by thrombin generates a new N-terminus that functions as a tethered ligand. Also proteolytically cleaved by cathepsin CTSG. Cleavage at 41-Arg-|-Ser-42 by CTSG results in receptor activation while cleavage at 55-Phe-|-Trp-56 results in inhibition of receptor activation. Post-translationally, phosphorylated in the C-terminal tail; probably mediating desensitization prior to the uncoupling and internalization of the receptor.

The protein localises to the cell membrane. Its function is as follows. High affinity receptor that binds the activated thrombin, leading to calcium release from intracellular stores. The thrombin-activated receptor signaling pathway is mediated through PTX-insensitive G proteins, activation of phospholipase C resulting in the production of 1D-myo-inositol 1,4,5-trisphosphate (InsP3) which binds to InsP3 receptors causing calcium release from the stores. In astrocytes, the calcium released into the cytosol allows the Ca(2+)-dependent release of L-glutamate into the synaptic cleft through BEST1, that targets the neuronal postsynaptic GRIN2A/NMDAR receptor resulting in the synaptic plasticity regulation. May play a role in platelets activation and in vascular development. Mediates up-regulation of pro-inflammatory cytokines, such as MCP-1/CCL2 and IL6, triggered by coagulation factor Xa (F10) in cardiac fibroblasts and umbilical vein endothelial cells. The sequence is that of Proteinase-activated receptor 1 from Papio hamadryas (Hamadryas baboon).